A 254-amino-acid polypeptide reads, in one-letter code: Cytokine-inducible SH2-containing protein (254 aa).

One can recognise an SH2 domain in the interval 82 to 188 (WYWGSITASE…ATTPALPTPK (107 aa)). Residues 171–195 (TRSDSPDLATTPALPTPKEDAPGDP) form a disordered region. Positions 205–253 (KLVQPFVRRSSTRSLQHLCRLVINRLVVDVDCLPLPRRMADYLRQYPFQ) constitute an SOCS box domain.

In terms of assembly, stably associated with the tyrosine-phosphorylated IL3 receptor beta chain and tyrosine-phosphorylated EPO receptor (EPOR).

It functions in the pathway protein modification; protein ubiquitination. Its function is as follows. SOCS family proteins form part of a classical negative feedback system that regulates cytokine signal transduction. CIS is involved in the negative regulation of cytokines that signal through the JAK-STAT5 pathway such as erythropoietin, prolactin and interleukin 3 (IL3) receptor. Inhibits STAT5 trans-activation by suppressing its tyrosine phosphorylation. May be a substrate recognition component of a SCF-like ECS (Elongin BC-CUL2/5-SOCS-box protein) E3 ubiquitin-protein ligase complex which mediates the ubiquitination and subsequent proteasomal degradation of target proteins. This Bos taurus (Bovine) protein is Cytokine-inducible SH2-containing protein (CISH).